Reading from the N-terminus, the 145-residue chain is Large ribosomal subunit protein bL19 (145 aa).

The protein belongs to the bacterial ribosomal protein bL19 family.

This protein is located at the 30S-50S ribosomal subunit interface and may play a role in the structure and function of the aminoacyl-tRNA binding site. The chain is Large ribosomal subunit protein bL19 from Brucella abortus (strain S19).